The chain runs to 577 residues: Solute carrier family 22 member 16 (577 aa).

The chain crosses the membrane as a helical span at residues 23-43 (LYFICAFQNISCGIHYLASVF). N-linked (GlcNAc...) asparagine glycosylation is found at N57, N65, N68, and N108. A run of 5 helical transmembrane segments spans residues 152–172 (WLAMLIQPLFMFGVLLGSVTF), 183–203 (VVLWATSSSMFLFGIAAAFAV), 214–234 (FLAMVASGYLVVGFVYVMEFI), 244–264 (VHLHSFFAVGTLLVALTGYLV), and 268–288 (WLYQMILSTVTVPFILCCWVL). 2 N-linked (GlcNAc...) asparagine glycosylation sites follow: N345 and N352. Transmembrane regions (helical) follow at residues 359–379 (TLTVWLIWFTGSLGFYSFSLN), 389–409 (LNLFLLGVVEIPAYTFVCIAM), 416–436 (TVLAYSLFCSALACGVVMVIP), 441–461 (ILGVVTAMVGKFAIGAAFGLI), 476–496 (LAVGSGSMVCRLASILAPFSV), and 501–521 (IWIFIPQLFVGTMALLSGVLT). The segment at 543–577 (ESENESKSSKLLLTTNNSGLEKTEAITPRDSGLGE) is disordered. Residues N546 and N558 are each glycosylated (N-linked (GlcNAc...) asparagine). Low complexity predominate over residues 551–560 (SKLLLTTNNS).

This sequence belongs to the major facilitator (TC 2.A.1) superfamily. Organic cation transporter (TC 2.A.1.19) family. In terms of tissue distribution, expressed in testis and epididymis (at protein level). Expressed in endometrium (at protein level); highly expressed during the normal secretory phase, but expression is significantly reduced in the proliferative phase. Expressed at lower levels in adult tissues including bone marrow (at protein level). Expressed in hematopoietic cells, including CD34(+) leukocytes. Expressed in fetal liver (at protein level), brain, lung, kidney, heart, skeletal muscle, spleen and thymus. Expressed in leukemia cells. Abundantly expressed in ovarian cancer clear-cell adenocarcinoma.

It localises to the cell membrane. The enzyme catalyses (R)-carnitine(in) = (R)-carnitine(out). It carries out the reaction spermidine(in) = spermidine(out). Facilitative organic cation transporter that mediates the transport of carnitine as well as the polyamine spermidine. Mediates the partially Na(+)-dependent bidirectional transport of carnitine. May mediate L-carnitine secretion from testis epididymal epithelium into the lumen which is involved in the maturation of spermatozoa. The polypeptide is Solute carrier family 22 member 16 (Homo sapiens (Human)).